Reading from the N-terminus, the 77-residue chain is MADFEKIKSIIVEQLGVDESEVTPEAHFINDLGADSLDTVELVMALEEEFGVEISDEDAEKIQTVGDVIKFIDKLKG.

Residues 1–76 form the Carrier domain; it reads MADFEKIKSI…DVIKFIDKLK (76 aa). An O-(pantetheine 4'-phosphoryl)serine modification is found at Ser-36.

The protein belongs to the acyl carrier protein (ACP) family. Post-translationally, 4'-phosphopantetheine is transferred from CoA to a specific serine of apo-ACP by AcpS. This modification is essential for activity because fatty acids are bound in thioester linkage to the sulfhydryl of the prosthetic group.

The protein resides in the cytoplasm. Its pathway is lipid metabolism; fatty acid biosynthesis. Functionally, carrier of the growing fatty acid chain in fatty acid biosynthesis. The chain is Acyl carrier protein from Leptospira biflexa serovar Patoc (strain Patoc 1 / Ames).